Here is a 382-residue protein sequence, read N- to C-terminus: Alanine racemase 1 (382 aa).

The active-site Proton acceptor; specific for D-alanine is K39. K39 bears the N6-(pyridoxal phosphate)lysine mark. R138 lines the substrate pocket. Residue Y265 is the Proton acceptor; specific for L-alanine of the active site. A substrate-binding site is contributed by M312.

It belongs to the alanine racemase family. It depends on pyridoxal 5'-phosphate as a cofactor.

The enzyme catalyses L-alanine = D-alanine. The protein operates within amino-acid biosynthesis; D-alanine biosynthesis; D-alanine from L-alanine: step 1/1. Its function is as follows. Catalyzes the interconversion of L-alanine and D-alanine. May also act on other amino acids. This Staphylococcus aureus (strain NCTC 8325 / PS 47) protein is Alanine racemase 1 (alr1).